A 632-amino-acid chain; its full sequence is Polyadenylate-binding protein, cytoplasmic and nuclear (632 aa).

Residues 1–11 (MSAADANQLQE) are compositionally biased toward polar residues. The tract at residues 1 to 43 (MSAADANQLQESLEKLNLDSAPAAAEEEAVAAESAPAGEEGAD) is disordered. Low complexity predominate over residues 31–43 (AAESAPAGEEGAD). RRM domains are found at residues 52-130 (ASLY…WSQR), 140-217 (GNIF…KHIS), 233-310 (TNIY…RAQK), and 336-413 (VNLF…LAQR). One can recognise a PABC domain in the interval 534 to 615 (QQRDLAAIIA…ALTAFEEYKN (82 aa)).

Belongs to the polyadenylate-binding protein type-1 family.

The protein localises to the cytoplasm. It localises to the nucleus. In terms of biological role, binds the poly(A) tail of mRNA. Appears to be an important mediator of the multiple roles of the poly(A) tail in mRNA biogenesis, stability and translation. In the nucleus, involved in both mRNA cleavage and polyadenylation. Is also required for efficient mRNA export to the cytoplasm. Acts in concert with a poly(A)-specific nuclease (PAN) to affect poly(A) tail shortening, which may occur concomitantly with either nucleocytoplasmic mRNA transport or translational initiation. In the cytoplasm, stimulates translation initiation and regulates mRNA decay through translation termination-coupled poly(A) shortening, probably mediated by PAN. The polypeptide is Polyadenylate-binding protein, cytoplasmic and nuclear (PAB1) (Scheffersomyces stipitis (strain ATCC 58785 / CBS 6054 / NBRC 10063 / NRRL Y-11545) (Yeast)).